Reading from the N-terminus, the 490-residue chain is Serine hydroxymethyltransferase (490 aa).

Residues Leu179 and 183 to 185 each bind (6S)-5,6,7,8-tetrahydrofolate; that span reads GHL. Lys291 is subject to N6-(pyridoxal phosphate)lysine. Residue Lys362 forms an Isoglutamyl lysine isopeptide (Lys-Gln) (interchain with Q-Cter in protein Pup) linkage.

Belongs to the SHMT family. In terms of assembly, homodimer. It depends on pyridoxal 5'-phosphate as a cofactor.

It localises to the cytoplasm. The catalysed reaction is (6R)-5,10-methylene-5,6,7,8-tetrahydrofolate + glycine + H2O = (6S)-5,6,7,8-tetrahydrofolate + L-serine. Its pathway is one-carbon metabolism; tetrahydrofolate interconversion. The protein operates within amino-acid biosynthesis; glycine biosynthesis; glycine from L-serine: step 1/1. Catalyzes the reversible interconversion of serine and glycine with tetrahydrofolate (THF) serving as the one-carbon carrier. This reaction serves as the major source of one-carbon groups required for the biosynthesis of purines, thymidylate, methionine, and other important biomolecules. Also exhibits THF-independent aldolase activity toward beta-hydroxyamino acids, producing glycine and aldehydes, via a retro-aldol mechanism. This is Serine hydroxymethyltransferase from Mycolicibacterium smegmatis (strain ATCC 700084 / mc(2)155) (Mycobacterium smegmatis).